Here is a 212-residue protein sequence, read N- to C-terminus: MKLSKYIDHTLLKPQATEKDILKLIEEAKTYDFASVCVNPSWVKLAYENLKDTDVKVCTVVGFPLGATSIASKVYETKVAIEDGADEIDMVIAVGQLKSGNDEYVKEEIKKIVEASRDKLVKVIIETCLLTEEEKVKACTLSKEAGADYVKTSTGFSTGGAKPEDIKLMRETVGKDMGVKASGGIHTREEMEVMIENGATRIGASCGVELVK.

Aspartate 89 serves as the catalytic Proton donor/acceptor. The active-site Schiff-base intermediate with acetaldehyde is the lysine 151. The active-site Proton donor/acceptor is the lysine 180.

This sequence belongs to the DeoC/FbaB aldolase family. DeoC type 1 subfamily.

It is found in the cytoplasm. It catalyses the reaction 2-deoxy-D-ribose 5-phosphate = D-glyceraldehyde 3-phosphate + acetaldehyde. The protein operates within carbohydrate degradation; 2-deoxy-D-ribose 1-phosphate degradation; D-glyceraldehyde 3-phosphate and acetaldehyde from 2-deoxy-alpha-D-ribose 1-phosphate: step 2/2. Catalyzes a reversible aldol reaction between acetaldehyde and D-glyceraldehyde 3-phosphate to generate 2-deoxy-D-ribose 5-phosphate. This Clostridium botulinum (strain 657 / Type Ba4) protein is Deoxyribose-phosphate aldolase.